A 200-amino-acid polypeptide reads, in one-letter code: Ras-related protein RABF2b (200 aa).

17-25 (GDVGAGKSS) lines the GTP pocket. The short motif at 39 to 47 (QESTIGAAF) is the Effector region element. Residues 65–69 (DTAGQ), 123–126 (NKSD), and 153–154 (SA) each bind GTP. Residues Cys-198 and Cys-199 are each lipidated (S-geranylgeranyl cysteine).

Belongs to the small GTPase superfamily. Rab family. As to quaternary structure, interacts with VPS9A homodimer. Interacts with TCTP1. Interacts with MON1. Interacts with EREX (via PX domain). Binds to VPS3. Expressed in roots and actively dividing cells.

It localises to the early endosome membrane. The protein resides in the endosome membrane. The protein localises to the prevacuolar compartment membrane. It is found in the endosome. Its subcellular location is the multivesicular body membrane. It localises to the cell membrane. The protein resides in the cytoplasm. With respect to regulation, regulated by guanine nucleotide exchange factors (GEFs) which promote the exchange of bound GDP for free GTP. Functionally, endosomal protein that may be involved in endocytosis. Involved in the trafficking of proteins from prevacuolar compartments (PVCs) to vacuoles. May activate the MON1-CCZ1 complex which acts as guanine nucleotide exchange factors (GEF) for Rab7 protein family, and serves as a link between Rab5 and Rab7 families in PVCs, and mediates PVC maturation. Involved in vacuolar transport of storage proteins with EREX as effector. Regulates membrane trafficking to protein storage vacuoles (PSVs). This Arabidopsis thaliana (Mouse-ear cress) protein is Ras-related protein RABF2b.